Reading from the N-terminus, the 755-residue chain is Polyribonucleotide nucleotidyltransferase (755 aa).

Residues D493 and D499 each coordinate Mg(2+). The 60-residue stretch at P560–I619 folds into the KH domain. The 70-residue stretch at G629–R698 folds into the S1 motif domain. A disordered region spans residues E704–D755. Residues R719–D755 are compositionally biased toward basic and acidic residues.

This sequence belongs to the polyribonucleotide nucleotidyltransferase family. Mg(2+) serves as cofactor.

The protein localises to the cytoplasm. It carries out the reaction RNA(n+1) + phosphate = RNA(n) + a ribonucleoside 5'-diphosphate. In terms of biological role, involved in mRNA degradation. Catalyzes the phosphorolysis of single-stranded polyribonucleotides processively in the 3'- to 5'-direction. The polypeptide is Polyribonucleotide nucleotidyltransferase (Chloroflexus aggregans (strain MD-66 / DSM 9485)).